We begin with the raw amino-acid sequence, 338 residues long: Rho GTPase-activating protein gacA (338 aa).

The region spanning asparagine 149–histidine 327 is the Rho-GAP domain.

It localises to the cytoplasm. Its function is as follows. Rho GTPase-activating protein involved in the signal transduction pathway. This is Rho GTPase-activating protein gacA (gacA) from Dictyostelium discoideum (Social amoeba).